Consider the following 229-residue polypeptide: Potassium/proton antiporter CemA (229 aa).

A run of 3 helical transmembrane segments spans residues 7–27 (LTPL…SISF), 106–126 (IILH…YSIL), and 189–209 (IISG…KYWI).

It belongs to the CemA family.

It is found in the plastid. It localises to the chloroplast inner membrane. The enzyme catalyses K(+)(in) + H(+)(out) = K(+)(out) + H(+)(in). Contributes to K(+)/H(+) antiport activity by supporting proton efflux to control proton extrusion and homeostasis in chloroplasts in a light-dependent manner to modulate photosynthesis. Prevents excessive induction of non-photochemical quenching (NPQ) under continuous-light conditions. Indirectly promotes efficient inorganic carbon uptake into chloroplasts. This Liriodendron tulipifera (Tuliptree) protein is Potassium/proton antiporter CemA.